The primary structure comprises 154 residues: NADPH-dependent 7-cyano-7-deazaguanine reductase (154 aa).

Positions 1–13 (MSKTDVSGLSQLG) are enriched in polar residues. Residues 1–24 (MSKTDVSGLSQLGRQVDAPTSPET) form a disordered region. The active-site Thioimide intermediate is C52. D59 (proton donor) is an active-site residue. Substrate-binding positions include 74–76 (VES) and 93–94 (HE).

This sequence belongs to the GTP cyclohydrolase I family. QueF type 1 subfamily.

It is found in the cytoplasm. The catalysed reaction is 7-aminomethyl-7-carbaguanine + 2 NADP(+) = 7-cyano-7-deazaguanine + 2 NADPH + 3 H(+). It functions in the pathway tRNA modification; tRNA-queuosine biosynthesis. Catalyzes the NADPH-dependent reduction of 7-cyano-7-deazaguanine (preQ0) to 7-aminomethyl-7-deazaguanine (preQ1). In Allorhizobium ampelinum (strain ATCC BAA-846 / DSM 112012 / S4) (Agrobacterium vitis (strain S4)), this protein is NADPH-dependent 7-cyano-7-deazaguanine reductase.